Here is a 533-residue protein sequence, read N- to C-terminus: Retinoid isomerohydrolase (533 aa).

A lipid anchor (S-palmitoyl cysteine; in membrane form) is attached at C112. S117 is modified (phosphoserine). H180 provides a ligand contact to Fe cation. The S-palmitoyl cysteine; in membrane form moiety is linked to residue C231. Residues H241 and H313 each coordinate Fe cation. C329 is lipidated: S-palmitoyl cysteine; in membrane form. H527 serves as a coordination point for Fe cation.

This sequence belongs to the carotenoid oxygenase family. Fe(2+) is required as a cofactor. Post-translationally, palmitoylation by LRAT regulates ligand binding specificity; the palmitoylated form (membrane form) specifically binds all-trans-retinyl-palmitate, while the soluble unpalmitoylated form binds all-trans-retinol (vitamin A). In terms of tissue distribution, retinal pigment epithelium specific.

The protein resides in the cytoplasm. It is found in the cell membrane. Its subcellular location is the microsome membrane. It carries out the reaction an all-trans-retinyl ester + H2O = 11-cis-retinol + a fatty acid + H(+). It catalyses the reaction lutein = (3R,3'S)-zeaxanthin. The enzyme catalyses all-trans-retinyl hexadecanoate + H2O = 11-cis-retinol + hexadecanoate + H(+). Critical isomerohydrolase in the retinoid cycle involved in regeneration of 11-cis-retinal, the chromophore of rod and cone opsins. Catalyzes the cleavage and isomerization of all-trans-retinyl fatty acid esters to 11-cis-retinol which is further oxidized by 11-cis retinol dehydrogenase to 11-cis-retinal for use as visual chromophore. Essential for the production of 11-cis retinal for both rod and cone photoreceptors. Also capable of catalyzing the isomerization of lutein to meso-zeaxanthin an eye-specific carotenoid. The soluble form binds vitamin A (all-trans-retinol), making it available for LRAT processing to all-trans-retinyl ester. The membrane form, palmitoylated by LRAT, binds all-trans-retinyl esters, making them available for IMH (isomerohydrolase) processing to all-cis-retinol. The soluble form is regenerated by transferring its palmitoyl groups onto 11-cis-retinol, a reaction catalyzed by LRAT. The protein is Retinoid isomerohydrolase (RPE65) of Gallus gallus (Chicken).